The sequence spans 272 residues: Putative hydro-lyase BBta_2883 (272 aa).

This sequence belongs to the D-glutamate cyclase family.

This chain is Putative hydro-lyase BBta_2883, found in Bradyrhizobium sp. (strain BTAi1 / ATCC BAA-1182).